We begin with the raw amino-acid sequence, 588 residues long: Adenine deaminase (588 aa).

It belongs to the metallo-dependent hydrolases superfamily. Adenine deaminase family. Homodimer. Mn(2+) serves as cofactor.

The enzyme catalyses adenine + H2O + H(+) = hypoxanthine + NH4(+). In Escherichia coli O6:H1 (strain CFT073 / ATCC 700928 / UPEC), this protein is Adenine deaminase.